Here is a 213-residue protein sequence, read N- to C-terminus: Ergothioneine transport ATP-binding protein EgtV (213 aa).

The 208-residue stretch at 5–212 (VTIENVSFNY…ATKTLEIKAL (208 aa)) folds into the ABC transporter domain. Residue 37 to 44 (GESGSGKS) coordinates ATP.

Belongs to the ABC transporter superfamily. The complex is composed of two ATP-binding proteins (EgtV) and two transmembrane proteins (EgtU).

The protein localises to the cell inner membrane. The enzyme catalyses ergothioneine(out) + ATP + H2O = ergothioneine(in) + ADP + phosphate + H(+). Its function is as follows. Part of the ABC transporter complex EgtUV involved in the uptake of ergothioneine (EGT), a natural low-molecular weight (LMW) thiol antioxidant which protects H.pylori against bleach stress. Responsible for energy coupling to the transport system. This chain is Ergothioneine transport ATP-binding protein EgtV, found in Helicobacter pylori (strain G27).